We begin with the raw amino-acid sequence, 406 residues long: MAVNGERAVHDENLGVLDRELIRAQSIQGCVGNPQECNSCAITSASRLFLVGLQASVITSGLILQYHVCEAAVNATIMGLIVVSGLWPTSVKFLRTLAKLGRCLQTVVVLGFAVLWAVGCPISRDLPFVELLGISISAITGTVAAVHIHYYNFVTTFNGPHIYFYVMMLGTGLGGLLTVILYMYVSKYEVLIGLCISIVTLVSIVDAATDLQDTCIYRKNRHKQLNTYTDLGFAVVYTQNDRGRVCDHRESSRTLKRVFKGIRIMSVIPPVLYIVTPLMWAISHIIKLNHFIKLTQVTLAVSIGGHIIAFGLQGFAVLYQEKKNLWVIVLYTTTSVTGIAVTFAGISWGAIIILTSTVAAGLTCIQMMRLSVKPIDCFMASHITKVYHVCVYIIINLCYLCGTYVS.

Helical transmembrane passes span 48–68 (LFLV…QYHV), 71–91 (AAVN…PTSV), 103–123 (CLQT…CPIS), 126–146 (LPFV…VAAV), 162–182 (IYFY…VILY), 188–208 (YEVL…VDAA), 266–286 (SVIP…SHII), 299–319 (LAVS…AVLY), 339–359 (IAVT…STVA), and 386–406 (VYHV…TYVS).

It belongs to the alphaherpesvirinae HHV-1 UL43 family.

It is found in the membrane. In Varicella-zoster virus (strain Dumas) (HHV-3), this protein is Membrane protein UL43 homolog.